The sequence spans 107 residues: UPF0145 protein MAB_3451c (107 aa).

This sequence belongs to the UPF0145 family.

The chain is UPF0145 protein MAB_3451c from Mycobacteroides abscessus (strain ATCC 19977 / DSM 44196 / CCUG 20993 / CIP 104536 / JCM 13569 / NCTC 13031 / TMC 1543 / L948) (Mycobacterium abscessus).